We begin with the raw amino-acid sequence, 607 residues long: Autophagy-related protein 16-1 (607 aa).

The interaction with ATG5 stretch occupies residues 13 to 43; the sequence is WKRHISEQLRRRDRLQRQAFEEIILQYNKLL. A coiled-coil region spans residues 79–230; the sequence is DSQLQEMAQL…QKELAEAAKE (152 aa). Residue serine 139 is modified to Phosphoserine. Residues 207–230 are WIPI2-binding; that stretch reads AENEKDSRRRQARLQKELAEAAKE. Residues 230–242 form an RB1CC1-binding region; it reads EPLPVEQDDDIEV. Phosphoserine is present on residues serine 269 and serine 287. A Caspase cleavage motif is present at residues 296-299; sequence DNVD. 7 WD repeats span residues 320–359, 364–403, 406–445, 447–484, 486–525, 532–573, and 575–607; these read AHDG…CEFK, GSNA…LRHT, GHSG…CIKT, FAGS…IVRE, ELLG…IKQT, KCGS…KVLS, and QHSS…WAQY.

The protein belongs to the WD repeat ATG16 family. As to quaternary structure, homodimer. Homooligomer. Heterooligomer with ATG16L2. Interacts with WIPI1. Interacts with WIPI2. Interacts with RB1CC1; the interaction is required for ULK1 complex-dependent autophagy. Interacts with ATG5. Part of the minor complex composed of 4 sets of ATG12-ATG5 and ATG16L1 (400 kDa); this complex interacts with ATG3 leading to disruption of ATG7 interaction and promotion of ATG8-like proteins lipidation. Part of the major complex composed of 8 sets of ATG12-ATG5 and ATG16L1 (800 kDa). Interacts with RAB33B (GTP- and GDP-bound forms); the complex consists of a tetramer where two RAB33B molecules bind independently one molecule of the ATG16L1 homodimer; the interaction promotes ATG12-ATG5-ATG16L1 complex recruitment to phagophores. Interacts (via WD repeats) with TMEM59; the interaction mediates unconventional autophagic activity of TMEM59. Interacts with TLR2. Interacts (via WD repeats) with MEFV. Interacts with PPP1CA; the interaction dephosphorylates ATG16L1 causing dissociation of ATG12-ATG5-ATG16L1 complex. Interacts (via N-terminal) with CLTC. Interacts with NOD1. Interacts with NOD2. Interacts with TUFM. Interacts with TRIM16. Interacts (via WD repeats) with SPATA33. Interacts with IRGM. Proteolytic cleavage by activated CASP3 leads to degradation and may regulate autophagy upon cellular stress and apoptotic stimuli. In terms of processing, phosphorylation at Ser-139 promotes association with the ATG12-ATG5 conjugate to form the ATG12-ATG5-ATG16L1 complex.

The protein localises to the cytoplasm. Its subcellular location is the preautophagosomal structure membrane. It localises to the endosome membrane. The protein resides in the lysosome membrane. In terms of biological role, plays an essential role in both canonical and non-canonical autophagy: interacts with ATG12-ATG5 to mediate the lipidation to ATG8 family proteins (MAP1LC3A, MAP1LC3B, MAP1LC3C, GABARAPL1, GABARAPL2 and GABARAP). Acts as a molecular hub, coordinating autophagy pathways via distinct domains that support either canonical or non-canonical signaling. During canonical autophagy, interacts with ATG12-ATG5 to mediate the conjugation of phosphatidylethanolamine (PE) to ATG8 proteins, to produce a membrane-bound activated form of ATG8. Thereby, controls the elongation of the nascent autophagosomal membrane. As part of the ATG8 conjugation system with ATG5 and ATG12, required for recruitment of LRRK2 to stressed lysosomes and induction of LRRK2 kinase activity in response to lysosomal stress. Also involved in non-canonical autophagy, a parallel pathway involving conjugation of ATG8 proteins to single membranes at endolysosomal compartments, probably by catalyzing conjugation of phosphatidylserine (PS) to ATG8. Non-canonical autophagy plays a key role in epithelial cells to limit lethal infection by influenza A (IAV) virus. Regulates mitochondrial antiviral signaling (MAVS)-dependent type I interferon (IFN-I) production. Negatively regulates NOD1- and NOD2-driven inflammatory cytokine response. Instead, promotes an autophagy-dependent antibacterial pathway together with NOD1 or NOD2. Plays a role in regulating morphology and function of Paneth cell. This is Autophagy-related protein 16-1 from Pongo abelii (Sumatran orangutan).